The chain runs to 59 residues: Ribosome biogenesis protein Nop10 (59 aa).

This sequence belongs to the NOP10 family.

In terms of biological role, involved in ribosome biogenesis; more specifically in 18S rRNA pseudouridylation and in cleavage of pre-rRNA. This Thermococcus kodakarensis (strain ATCC BAA-918 / JCM 12380 / KOD1) (Pyrococcus kodakaraensis (strain KOD1)) protein is Ribosome biogenesis protein Nop10.